The following is a 198-amino-acid chain: Nucleoside triphosphate pyrophosphatase (198 aa).

Residue D74 is the Proton acceptor of the active site.

The protein belongs to the Maf family. A divalent metal cation is required as a cofactor.

The protein resides in the cytoplasm. The enzyme catalyses a ribonucleoside 5'-triphosphate + H2O = a ribonucleoside 5'-phosphate + diphosphate + H(+). It carries out the reaction a 2'-deoxyribonucleoside 5'-triphosphate + H2O = a 2'-deoxyribonucleoside 5'-phosphate + diphosphate + H(+). Its function is as follows. Nucleoside triphosphate pyrophosphatase. May have a dual role in cell division arrest and in preventing the incorporation of modified nucleotides into cellular nucleic acids. The protein is Nucleoside triphosphate pyrophosphatase of Sphingopyxis alaskensis (strain DSM 13593 / LMG 18877 / RB2256) (Sphingomonas alaskensis).